The following is a 361-amino-acid chain: Protein RecA (361 aa).

77–84 provides a ligand contact to ATP; it reads GPESSGKT.

It belongs to the RecA family.

It is found in the cytoplasm. Its function is as follows. Can catalyze the hydrolysis of ATP in the presence of single-stranded DNA, the ATP-dependent uptake of single-stranded DNA by duplex DNA, and the ATP-dependent hybridization of homologous single-stranded DNAs. It interacts with LexA causing its activation and leading to its autocatalytic cleavage. The polypeptide is Protein RecA (Brucella anthropi (strain ATCC 49188 / DSM 6882 / CCUG 24695 / JCM 21032 / LMG 3331 / NBRC 15819 / NCTC 12168 / Alc 37) (Ochrobactrum anthropi)).